Consider the following 943-residue polypeptide: Centromere protein C (943 aa).

Lysine 45 is covalently cross-linked (Glycyl lysine isopeptide (Lys-Gly) (interchain with G-Cter in SUMO2)). Residues 70–91 (CIQSPSKECQKSHPKSVPVSSK) form a disordered region. A phosphoserine mark is found at serine 73 and serine 96. Lysine 119 participates in a covalent cross-link: Glycyl lysine isopeptide (Lys-Gly) (interchain with G-Cter in SUMO2). Position 130 is a phosphothreonine (threonine 130). A Glycyl lysine isopeptide (Lys-Gly) (interchain with G-Cter in SUMO2) cross-link involves residue lysine 134. Phosphoserine is present on serine 146. A Glycyl lysine isopeptide (Lys-Gly) (interchain with G-Cter in SUMO2) cross-link involves residue lysine 180. A Phosphothreonine modification is found at threonine 183. Position 189 is a phosphoserine (serine 189). Residues lysine 212 and lysine 217 each participate in a glycyl lysine isopeptide (Lys-Gly) (interchain with G-Cter in SUMO2) cross-link. Over residues 224 to 239 (VSDEEDKTSEGQERKP) the composition is skewed to basic and acidic residues. A disordered region spans residues 224-250 (VSDEEDKTSEGQERKPSGSSQNRIRDS). The residue at position 225 (serine 225) is a Phosphoserine. Residues lysine 238 and lysine 260 each participate in a glycyl lysine isopeptide (Lys-Gly) (interchain with G-Cter in SUMO2) cross-link. Positions 259 to 273 (KKSFSTLFLETVKRK) match the Nuclear localization signal motif. Phosphoserine is present on serine 261. Residues lysine 271, lysine 273, and lysine 297 each participate in a glycyl lysine isopeptide (Lys-Gly) (interchain with G-Cter in SUMO2) cross-link. Serine 316, serine 333, serine 376, and serine 397 each carry phosphoserine. Positions 358-377 (LANDKHSHKPHPVETSQPSD) are disordered. The disordered stretch occupies residues 403 to 513 (YSKNAEKPSR…SKNKLVPEEV (111 aa)). Positions 412 to 426 (RSKRTIKQKQRRKFM) are enriched in basic residues. 2 stretches are compositionally biased toward basic and acidic residues: residues 438–463 (QSKDENIHTSHITQDEFQRNSDRNME) and 488–510 (TRKDKEESKKKRFSSESKNKLVP). Serine 439 bears the Phosphoserine mark. Residue lysine 440 forms a Glycyl lysine isopeptide (Lys-Gly) (interchain with G-Cter in SUMO2) linkage. The Nuclear localization signal motif lies at 484–499 (KKSSTRKDKEESKKKR). The residue at position 528 (serine 528) is a Phosphoserine. Lysine 534 participates in a covalent cross-link: Glycyl lysine isopeptide (Lys-Gly) (interchain with G-Cter in SUMO2). Disordered regions lie at residues 537 to 587 (ESPV…ATKG) and 632 to 717 (DCSR…KQSK). The residue at position 538 (serine 538) is a Phosphoserine. The Nuclear localization signal signature appears at 558 to 574 (RKSTKKTNQSSKNIRKK). Residues 570 to 583 (NIRKKTIPLKRQKT) show a composition bias toward basic residues. Over residues 633-672 (CSRSTRSSKNEDNIMTAQNVPLKPQTSGYTCNIPTESNLD) the composition is skewed to polar residues. Lysine 677 is covalently cross-linked (Glycyl lysine isopeptide (Lys-Gly) (interchain with G-Cter in SUMO2)). Phosphoserine is present on residues serine 684, serine 709, and serine 710. Over residues 706–715 (VHGSSDDSKQ) the composition is skewed to basic and acidic residues. Lysine 727 is covalently cross-linked (Glycyl lysine isopeptide (Lys-Gly) (interchain with G-Cter in SUMO2)). Phosphothreonine is present on threonine 734. The MIF2 homology domain II stretch occupies residues 737 to 759 (VRRTKRTRLKPLEYWRGERIDYQ). Serine 763 and serine 773 each carry phosphoserine. The short motif at 780–798 (KRKAKENIGKVNKKSNKKR) is the Nuclear localization signal element. Lysine 807 is covalently cross-linked (Glycyl lysine isopeptide (Lys-Gly) (interchain with G-Cter in SUMO2)). An MIF2 homology domain III region spans residues 890–943 (LVFYVNFGDLLCTLHETPYILSTGDSFYVPSGNYYNIKNLRNEESVLLFTQIKR).

The protein belongs to the CENP-C/MIF2 family. In terms of assembly, oligomer. Component of the CENPA-NAC complex, at least composed of CENPA, CENPC, CENPH, CENPM, CENPN, CENPT and CENPU. The CENPA-NAC complex interacts with the CENPA-CAD complex, composed of CENPI, CENPK, CENPL, CENPO, CENPP, CENPQ, CENPR and CENPS. Binds to DAXX. Interacts with DNMT3B. Interacts directly with CENPA. Identified in a centromere complex containing histones H2A, H2B and H4, and at least CENPA, CENPB, CENPC, CENPT, CENPN, HJURP, SUPT16H, SSRP1 and RSF1. Interacts with MEIKIN.

Its subcellular location is the nucleus. The protein resides in the chromosome. It is found in the centromere. It localises to the kinetochore. In terms of biological role, component of the CENPA-NAC (nucleosome-associated) complex, a complex that plays a central role in assembly of kinetochore proteins, mitotic progression and chromosome segregation. The CENPA-NAC complex recruits the CENPA-CAD (nucleosome distal) complex and may be involved in incorporation of newly synthesized CENPA into centromeres. CENPC recruits DNA methylation and DNMT3B to both centromeric and pericentromeric satellite repeats and regulates the histone code in these regions. The protein is Centromere protein C (CENPC) of Homo sapiens (Human).